A 297-amino-acid chain; its full sequence is Homoserine kinase (297 aa).

ATP is bound at residue 82–92; the sequence is PLTRGLGSSAS.

This sequence belongs to the GHMP kinase family. Homoserine kinase subfamily.

Its subcellular location is the cytoplasm. It carries out the reaction L-homoserine + ATP = O-phospho-L-homoserine + ADP + H(+). It functions in the pathway amino-acid biosynthesis; L-threonine biosynthesis; L-threonine from L-aspartate: step 4/5. Catalyzes the ATP-dependent phosphorylation of L-homoserine to L-homoserine phosphate. The protein is Homoserine kinase of Bacillus cereus (strain AH187).